The chain runs to 292 residues: 4-hydroxy-tetrahydrodipicolinate synthase (292 aa).

Thr45 is a binding site for pyruvate. The Proton donor/acceptor role is filled by Tyr133. Lys161 (schiff-base intermediate with substrate) is an active-site residue. Ile203 is a binding site for pyruvate.

Belongs to the DapA family. As to quaternary structure, homodimer.

The protein localises to the cytoplasm. It carries out the reaction L-aspartate 4-semialdehyde + pyruvate = (2S,4S)-4-hydroxy-2,3,4,5-tetrahydrodipicolinate + H2O + H(+). Its pathway is amino-acid biosynthesis; L-lysine biosynthesis via DAP pathway; (S)-tetrahydrodipicolinate from L-aspartate: step 3/4. Its function is as follows. Catalyzes the condensation of (S)-aspartate-beta-semialdehyde [(S)-ASA] and pyruvate to 4-hydroxy-tetrahydrodipicolinate (HTPA). The protein is 4-hydroxy-tetrahydrodipicolinate synthase of Pseudomonas putida (strain W619).